The chain runs to 448 residues: tRNA(Ile)-lysidine synthase (448 aa).

25-30 (SGGSDS) provides a ligand contact to ATP.

The protein belongs to the tRNA(Ile)-lysidine synthase family.

The protein resides in the cytoplasm. The catalysed reaction is cytidine(34) in tRNA(Ile2) + L-lysine + ATP = lysidine(34) in tRNA(Ile2) + AMP + diphosphate + H(+). Its function is as follows. Ligates lysine onto the cytidine present at position 34 of the AUA codon-specific tRNA(Ile) that contains the anticodon CAU, in an ATP-dependent manner. Cytidine is converted to lysidine, thus changing the amino acid specificity of the tRNA from methionine to isoleucine. The chain is tRNA(Ile)-lysidine synthase from Brucella suis biovar 1 (strain 1330).